The primary structure comprises 334 residues: Probable quinone oxidoreductase (334 aa).

The protein belongs to the zinc-containing alcohol dehydrogenase family. Quinone oxidoreductase subfamily.

It carries out the reaction 2 a quinone + NADPH + H(+) = 2 a 1,4-benzosemiquinone + NADP(+). This Saccharomyces cerevisiae (strain ATCC 204508 / S288c) (Baker's yeast) protein is Probable quinone oxidoreductase (ZTA1).